Here is a 123-residue protein sequence, read N- to C-terminus: Maintenance of telomere capping protein 3, mitochondrial (123 aa).

The transit peptide at 1-37 (MMGRNGIRLALKRSFSTYQPPVVEITNITKLWPTLRP) directs the protein to the mitochondrion.

The protein resides in the mitochondrion. Functionally, may be involved in telomere capping. This chain is Maintenance of telomere capping protein 3, mitochondrial (MTC3), found in Saccharomyces cerevisiae (strain ATCC 204508 / S288c) (Baker's yeast).